The sequence spans 336 residues: MSAQVIAIDAMGGDFGPRSIVQASLACLSATPSLHLTLVGQPSLLEELITGQSAADRARLTIVPASEVITMDEKPAQALRGKPDSSMRVALELLRDGKVQACVSAGNTGALMALSRFVLKTLPGIDRPAMVAAIPTQKGYCQLLDLGANVDCSAEHLLQFAVMGSVAAQTLGIARPRVALLNIGTEDIKGNQQVKLAATLLQAARGINYIGFIEGDGLYRGEADVVVCDGFVGNILLKSSEGLATMIAARIEALFKKNLASRAVGALALPLMRRLQADLAPARHNGASFLGLQGIVVKSHGSAGVQGFQSAIQRALIEIQENLPERLHGRLEDLLS.

Belongs to the PlsX family. Homodimer. Probably interacts with PlsY.

It localises to the cytoplasm. It carries out the reaction a fatty acyl-[ACP] + phosphate = an acyl phosphate + holo-[ACP]. The protein operates within lipid metabolism; phospholipid metabolism. In terms of biological role, catalyzes the reversible formation of acyl-phosphate (acyl-PO(4)) from acyl-[acyl-carrier-protein] (acyl-ACP). This enzyme utilizes acyl-ACP as fatty acyl donor, but not acyl-CoA. The protein is Phosphate acyltransferase of Pseudomonas fluorescens (strain Pf0-1).